The sequence spans 316 residues: MHNFLESEKAIHELEGKIIELINFADKNKVDLTYEIEILSQKLEQMQKEMYENLNPWSKVKLARLQERPTTLDYIEKLISGFTEFHGDRFYGDDTAIVGGIGLFEGIPVTVIGHQKGKDTKDNIRRNFGMPHPEGYRKALRLMKQAEKFKRPILTFIDTSGAYCGIGAEERGQGEAIAVNLIEMSKLKTPIIAIVIGEGGSGGALALGIGDRVCMLEHSIYSVISPEGLSTILWKDATLAQRAADMMQLTAQDLWSMKVIDQVIKEPLGGAHKNADLVADQIKTYVLQELKDLRMLKTEELLEKRYTKIRNIGIWK.

Residues 35–292 (EIEILSQKLE…KTYVLQELKD (258 aa)) enclose the CoA carboxyltransferase C-terminal domain.

The protein belongs to the AccA family. Acetyl-CoA carboxylase is a heterohexamer composed of biotin carboxyl carrier protein (AccB), biotin carboxylase (AccC) and two subunits each of ACCase subunit alpha (AccA) and ACCase subunit beta (AccD).

It localises to the cytoplasm. The enzyme catalyses N(6)-carboxybiotinyl-L-lysyl-[protein] + acetyl-CoA = N(6)-biotinyl-L-lysyl-[protein] + malonyl-CoA. It participates in lipid metabolism; malonyl-CoA biosynthesis; malonyl-CoA from acetyl-CoA: step 1/1. In terms of biological role, component of the acetyl coenzyme A carboxylase (ACC) complex. First, biotin carboxylase catalyzes the carboxylation of biotin on its carrier protein (BCCP) and then the CO(2) group is transferred by the carboxyltransferase to acetyl-CoA to form malonyl-CoA. In Alkaliphilus oremlandii (strain OhILAs) (Clostridium oremlandii (strain OhILAs)), this protein is Acetyl-coenzyme A carboxylase carboxyl transferase subunit alpha.